The sequence spans 406 residues: Multifunctional CCA protein (406 aa).

2 residues coordinate ATP: G8 and R11. CTP-binding residues include G8 and R11. Residues D21 and D23 each coordinate Mg(2+). Residues R91, R137, and R140 each coordinate ATP. The CTP site is built by R91, R137, and R140. Positions 228–329 (TGIHTLMVAQ…IKILNKFDVW (102 aa)) constitute an HD domain.

Belongs to the tRNA nucleotidyltransferase/poly(A) polymerase family. Bacterial CCA-adding enzyme type 1 subfamily. In terms of assembly, monomer. Can also form homodimers and oligomers. Requires Mg(2+) as cofactor. The cofactor is Ni(2+).

It carries out the reaction a tRNA precursor + 2 CTP + ATP = a tRNA with a 3' CCA end + 3 diphosphate. The enzyme catalyses a tRNA with a 3' CCA end + 2 CTP + ATP = a tRNA with a 3' CCACCA end + 3 diphosphate. Functionally, catalyzes the addition and repair of the essential 3'-terminal CCA sequence in tRNAs without using a nucleic acid template. Adds these three nucleotides in the order of C, C, and A to the tRNA nucleotide-73, using CTP and ATP as substrates and producing inorganic pyrophosphate. tRNA 3'-terminal CCA addition is required both for tRNA processing and repair. Also involved in tRNA surveillance by mediating tandem CCA addition to generate a CCACCA at the 3' terminus of unstable tRNAs. While stable tRNAs receive only 3'-terminal CCA, unstable tRNAs are marked with CCACCA and rapidly degraded. The polypeptide is Multifunctional CCA protein (Vibrio campbellii (strain ATCC BAA-1116)).